The chain runs to 244 residues: Tyrosine recombinase XerD-like (244 aa).

The Core-binding (CB) domain maps to Met1 to Tyr73. One can recognise a Tyr recombinase domain in the interval Ala90–Arg244. Residues Lys150 and Arg211 contribute to the active site. Tyr243 acts as the O-(3'-phospho-DNA)-tyrosine intermediate in catalysis.

It belongs to the 'phage' integrase family. XerD-like subfamily.

Its subcellular location is the cytoplasm. In terms of biological role, putative tyrosine recombinase. Not involved in the cutting and rejoining of the recombining DNA molecules on dif(SL) site. In Streptococcus pneumoniae serotype 2 (strain D39 / NCTC 7466), this protein is Tyrosine recombinase XerD-like.